The chain runs to 201 residues: Acyl-homoserine-lactone synthase (201 aa).

This sequence belongs to the autoinducer synthase family.

It carries out the reaction a fatty acyl-[ACP] + S-adenosyl-L-methionine = an N-acyl-L-homoserine lactone + S-methyl-5'-thioadenosine + holo-[ACP] + H(+). Its function is as follows. Required for the synthesis of PAI consisting of 3-oxo-N-(tetrahydro-2-oxo-3-furanyl)-dodecanamide also known as N-(3-oxododecanoyl)homoserine lactone, an autoinducer molecule which binds to LasR and thus acts in elastase biosynthesis regulation. This Pseudomonas aeruginosa (strain ATCC 15692 / DSM 22644 / CIP 104116 / JCM 14847 / LMG 12228 / 1C / PRS 101 / PAO1) protein is Acyl-homoserine-lactone synthase (lasI).